A 155-amino-acid polypeptide reads, in one-letter code: Protein-export protein SecB (155 aa).

It belongs to the SecB family. As to quaternary structure, homotetramer, a dimer of dimers. One homotetramer interacts with 1 SecA dimer.

It is found in the cytoplasm. In terms of biological role, one of the proteins required for the normal export of preproteins out of the cell cytoplasm. It is a molecular chaperone that binds to a subset of precursor proteins, maintaining them in a translocation-competent state. It also specifically binds to its receptor SecA. This is Protein-export protein SecB from Shigella sonnei (strain Ss046).